A 342-amino-acid polypeptide reads, in one-letter code: MEDNFASVVESLSGTSASALPLLTVSPADTSLKAPETKVQETKTEEKKPPKKRKSWGQELPIPKTNLPPRKRAKTEDEKEQRRIERVLRNRAAAQTSRERKRLEMEKLENEKIQMEQQNQFLLQRLSQMEAENNRLSQQLAQLTAEVRNSRNSTPKPGSPATASPTLTPTLFKQEGDELPLERIPFPTPSITDYSPTLKPSSLAESSDVTQHPAVSVGGLEGPGSALPLFDLGSGVEHDAANDIAAPLSDDDFHRLFNGDSSTEPDSSVIEDGFSFDILDSGDLSAFPFDSMVNFDSEPVALEGIEPAHGLPNETPYQTSGLQPSLGASTSRCDGQGIAAGC.

A disordered region spans residues 1-105 (MEDNFASVVE…TSRERKRLEM (105 aa)). Composition is skewed to basic and acidic residues over residues 35 to 48 (PETKVQETKTEEKK) and 74 to 88 (KTEDEKEQRRIERVL). A bZIP domain is found at 80-143 (EQRRIERVLR…NRLSQQLAQL (64 aa)). Positions 82–135 (RRIERVLRNRAAAQTSRERKRLEMEKLENEKIQMEQQNQFLLQRLSQMEAENNR) are basic motif. The interval 136-143 (LSQQLAQL) is leucine-zipper. Disordered stretches follow at residues 146-167 (EVRNSRNSTPKPGSPATASPTL) and 306-330 (EPAHGLPNETPYQTSGLQPSLGAST). Residues 315 to 330 (TPYQTSGLQPSLGAST) are compositionally biased toward polar residues.

This sequence belongs to the bZIP family.

It localises to the nucleus. Functionally, master transcriptional regulator of the unfolded protein response (UPR) that recognizes and binds to the UPR element (UPRE) in the promoter of UPR-regulated genes. In the canonical UPR pathway, the ireA RNase splices the cytoplasmic mRNA hacA, which alters the reading frame to allow translation of the bZIP transcription factor hacA. Induces the expression of pmrA, scrA and spfA in response to UPR. The chain is Transcriptional regulator of the unfolded protein response hacA from Aspergillus fumigatus (strain ATCC MYA-4609 / CBS 101355 / FGSC A1100 / Af293) (Neosartorya fumigata).